The primary structure comprises 399 residues: Tyrosine--tRNA ligase (399 aa).

The 'HIGH' region signature appears at 44 to 53 (PTAPDLHLGH). Residues 229 to 233 (KMSKS) carry the 'KMSKS' region motif. Lys-232 lines the ATP pocket. Residues 338 to 398 (ISITKALVDC…GKRKFAKLKV (61 aa)) enclose the S4 RNA-binding domain.

It belongs to the class-I aminoacyl-tRNA synthetase family. TyrS type 2 subfamily. Homodimer.

The protein localises to the cytoplasm. The catalysed reaction is tRNA(Tyr) + L-tyrosine + ATP = L-tyrosyl-tRNA(Tyr) + AMP + diphosphate + H(+). In terms of biological role, catalyzes the attachment of tyrosine to tRNA(Tyr) in a two-step reaction: tyrosine is first activated by ATP to form Tyr-AMP and then transferred to the acceptor end of tRNA(Tyr). The sequence is that of Tyrosine--tRNA ligase from Sulfurimonas denitrificans (strain ATCC 33889 / DSM 1251) (Thiomicrospira denitrificans (strain ATCC 33889 / DSM 1251)).